The chain runs to 303 residues: UDP-3-O-acyl-N-acetylglucosamine deacetylase (303 aa).

The Zn(2+) site is built by H78, H237, and D241. H264 acts as the Proton donor in catalysis.

Belongs to the LpxC family. It depends on Zn(2+) as a cofactor.

It catalyses the reaction a UDP-3-O-[(3R)-3-hydroxyacyl]-N-acetyl-alpha-D-glucosamine + H2O = a UDP-3-O-[(3R)-3-hydroxyacyl]-alpha-D-glucosamine + acetate. It participates in glycolipid biosynthesis; lipid IV(A) biosynthesis; lipid IV(A) from (3R)-3-hydroxytetradecanoyl-[acyl-carrier-protein] and UDP-N-acetyl-alpha-D-glucosamine: step 2/6. Its function is as follows. Catalyzes the hydrolysis of UDP-3-O-myristoyl-N-acetylglucosamine to form UDP-3-O-myristoylglucosamine and acetate, the committed step in lipid A biosynthesis. This is UDP-3-O-acyl-N-acetylglucosamine deacetylase from Stenotrophomonas maltophilia (strain R551-3).